Here is an 81-residue protein sequence, read N- to C-terminus: Large ribosomal subunit protein bL31B (81 aa).

Belongs to the bacterial ribosomal protein bL31 family. Type B subfamily. As to quaternary structure, part of the 50S ribosomal subunit.

The protein is Large ribosomal subunit protein bL31B of Borreliella afzelii (strain PKo) (Borrelia afzelii).